The following is a 94-amino-acid chain: DNA-directed RNA polymerase subunit omega (94 aa).

The protein belongs to the RNA polymerase subunit omega family. As to quaternary structure, the RNAP catalytic core consists of 2 alpha, 1 beta, 1 beta' and 1 omega subunit. When a sigma factor is associated with the core the holoenzyme is formed, which can initiate transcription.

The enzyme catalyses RNA(n) + a ribonucleoside 5'-triphosphate = RNA(n+1) + diphosphate. In terms of biological role, promotes RNA polymerase assembly. Latches the N- and C-terminal regions of the beta' subunit thereby facilitating its interaction with the beta and alpha subunits. This is DNA-directed RNA polymerase subunit omega from Frankia alni (strain DSM 45986 / CECT 9034 / ACN14a).